The chain runs to 84 residues: Cell division topological specificity factor (84 aa).

It belongs to the MinE family.

Functionally, prevents the cell division inhibition by proteins MinC and MinD at internal division sites while permitting inhibition at polar sites. This ensures cell division at the proper site by restricting the formation of a division septum at the midpoint of the long axis of the cell. The polypeptide is Cell division topological specificity factor (Cupriavidus taiwanensis (strain DSM 17343 / BCRC 17206 / CCUG 44338 / CIP 107171 / LMG 19424 / R1) (Ralstonia taiwanensis (strain LMG 19424))).